The following is a 206-amino-acid chain: Ribosomal RNA large subunit methyltransferase E (206 aa).

Gly-60, Trp-62, Asp-80, Asp-96, and Asp-121 together coordinate S-adenosyl-L-methionine. Lys-161 functions as the Proton acceptor in the catalytic mechanism.

This sequence belongs to the class I-like SAM-binding methyltransferase superfamily. RNA methyltransferase RlmE family.

Its subcellular location is the cytoplasm. It catalyses the reaction uridine(2552) in 23S rRNA + S-adenosyl-L-methionine = 2'-O-methyluridine(2552) in 23S rRNA + S-adenosyl-L-homocysteine + H(+). Its function is as follows. Specifically methylates the uridine in position 2552 of 23S rRNA at the 2'-O position of the ribose in the fully assembled 50S ribosomal subunit. This is Ribosomal RNA large subunit methyltransferase E from Francisella tularensis subsp. holarctica (strain FTNF002-00 / FTA).